Consider the following 170-residue polypeptide: ATP synthase subunit b (170 aa).

The helical transmembrane segment at 22-41 (ILNWAVVVFGLYKFLPGFLG) threads the bilayer. A disordered region spans residues 76 to 98 (LSSAAEKASQIKADSLKRSESIR). Basic and acidic residues predominate over residues 89 to 98 (DSLKRSESIR).

It belongs to the ATPase B chain family. As to quaternary structure, F-type ATPases have 2 components, F(1) - the catalytic core - and F(0) - the membrane proton channel. F(1) has five subunits: alpha(3), beta(3), gamma(1), delta(1), epsilon(1). F(0) has four main subunits: a(1), b(1), b'(1) and c(10-14). The alpha and beta chains form an alternating ring which encloses part of the gamma chain. F(1) is attached to F(0) by a central stalk formed by the gamma and epsilon chains, while a peripheral stalk is formed by the delta, b and b' chains.

It is found in the cellular thylakoid membrane. Its function is as follows. F(1)F(0) ATP synthase produces ATP from ADP in the presence of a proton or sodium gradient. F-type ATPases consist of two structural domains, F(1) containing the extramembraneous catalytic core and F(0) containing the membrane proton channel, linked together by a central stalk and a peripheral stalk. During catalysis, ATP synthesis in the catalytic domain of F(1) is coupled via a rotary mechanism of the central stalk subunits to proton translocation. Component of the F(0) channel, it forms part of the peripheral stalk, linking F(1) to F(0). This chain is ATP synthase subunit b, found in Prochlorococcus marinus (strain AS9601).